A 144-amino-acid polypeptide reads, in one-letter code: Cell division protein SepF (144 aa).

It belongs to the SepF family. As to quaternary structure, homodimer. Interacts with FtsZ.

It is found in the cytoplasm. Its function is as follows. Cell division protein that is part of the divisome complex and is recruited early to the Z-ring. Probably stimulates Z-ring formation, perhaps through the cross-linking of FtsZ protofilaments. Its function overlaps with FtsA. The polypeptide is Cell division protein SepF (Geobacillus sp. (strain WCH70)).